Here is a 304-residue protein sequence, read N- to C-terminus: UTP--glucose-1-phosphate uridylyltransferase 1 (304 aa).

Belongs to the UDPGP type 2 family.

It catalyses the reaction alpha-D-glucose 1-phosphate + UTP + H(+) = UDP-alpha-D-glucose + diphosphate. The protein operates within carbohydrate metabolism; nucleotide-sugar metabolism. The sequence is that of UTP--glucose-1-phosphate uridylyltransferase 1 (hasC1) from Streptococcus pyogenes serotype M3 (strain ATCC BAA-595 / MGAS315).